Consider the following 531-residue polypeptide: Peptide chain release factor 3 (531 aa).

In terms of domain architecture, tr-type G spans 10-278 (ARRRTFAIIS…DFVEHAPGPL (269 aa)). Residues 19 to 26 (SHPDAGKT), 87 to 91 (DTPGH), and 141 to 144 (NKLD) each bind GTP.

Belongs to the TRAFAC class translation factor GTPase superfamily. Classic translation factor GTPase family. PrfC subfamily.

It localises to the cytoplasm. Its function is as follows. Increases the formation of ribosomal termination complexes and stimulates activities of RF-1 and RF-2. It binds guanine nucleotides and has strong preference for UGA stop codons. It may interact directly with the ribosome. The stimulation of RF-1 and RF-2 is significantly reduced by GTP and GDP, but not by GMP. The polypeptide is Peptide chain release factor 3 (Thioalkalivibrio sulfidiphilus (strain HL-EbGR7)).